A 67-amino-acid chain; its full sequence is Beta-defensin 103A (67 aa).

A signal peptide spans 1–22 (MRIHFLLFALLFLFLMPVPGNG). 3 disulfides stabilise this stretch: Cys33–Cys62, Cys40–Cys55, and Cys45–Cys63.

Belongs to the beta-defensin family.

The protein localises to the secreted. Exhibits antimicrobial activity against Gram-positive and Gram-negative bacteria. The sequence is that of Beta-defensin 103A (DEFB103A) from Equus caballus (Horse).